We begin with the raw amino-acid sequence, 67 residues long: Neurotoxin Cex10 (67 aa).

Residues 1–65 (KDGYLVEVTG…TWPLPNKSCG (65 aa)) form the LCN-type CS-alpha/beta domain. Cystine bridges form between cysteine 11–cysteine 64, cysteine 15–cysteine 40, cysteine 24–cysteine 45, and cysteine 28–cysteine 47. Cysteine 64 is subject to Cysteine amide. Positions 65–67 (GKK) are excised as a propeptide.

This sequence belongs to the long (4 C-C) scorpion toxin superfamily. Sodium channel inhibitor family. Beta subfamily. As to expression, expressed by the venom gland.

It is found in the secreted. Its function is as follows. Beta toxins bind voltage-independently at site-4 of sodium channels (Nav) and shift the voltage of activation toward more negative potentials thereby affecting sodium channel activation and promoting spontaneous and repetitive firing. The protein is Neurotoxin Cex10 of Centruroides exilicauda (Bark scorpion).